A 189-amino-acid polypeptide reads, in one-letter code: MVRKAAQEPKDDTLQMKVRQYVVSAARLPIEQGTKPEILQMRVFARDEVHAKTKFWYNMRKLNKIKRSQGRILSVNEIYEKSLNTVKTYGIVLKYQSRTAIHNMYKEYRDVSLNGAVSQLIQDMAGNHRAQPDTIQIIRTATLEPKDIKRPATLAMRNAALKFPIVKTIHRPSEKKYRTVYKATRPTTF.

It belongs to the eukaryotic ribosomal protein eL20 family.

It localises to the cytoplasm. This Tetrahymena thermophila protein is Large ribosomal subunit protein eL20 (RPL18A).